We begin with the raw amino-acid sequence, 217 residues long: MSPFTAGPAPARTPRAEEGDTPATRFDDRLAEQLLDQRIVLLGTQVDEVSANRVCAQLLILSAQDPRTDISLYVNSPGGSVHAGLAIYDTMRLIPNDVSTLAMGFAASMGQFLLSVGTAGKRYALPNARIMMHQPSAGIGGTTADIEIQADNLDFTKRTIERITAEHTGQSPETISRDGDRDRWFTAEEAREYGMVDQVVQSLADVRPAATRRRMGL.

The span at 1–13 shows a compositional bias: low complexity; that stretch reads MSPFTAGPAPART. A disordered region spans residues 1–23; it reads MSPFTAGPAPARTPRAEEGDTPA. The active-site Nucleophile is the S108. The active site involves H133.

Belongs to the peptidase S14 family. Fourteen ClpP subunits assemble into 2 heptameric rings which stack back to back to give a disk-like structure with a central cavity, resembling the structure of eukaryotic proteasomes.

It localises to the cytoplasm. It carries out the reaction Hydrolysis of proteins to small peptides in the presence of ATP and magnesium. alpha-casein is the usual test substrate. In the absence of ATP, only oligopeptides shorter than five residues are hydrolyzed (such as succinyl-Leu-Tyr-|-NHMec, and Leu-Tyr-Leu-|-Tyr-Trp, in which cleavage of the -Tyr-|-Leu- and -Tyr-|-Trp bonds also occurs).. In terms of biological role, cleaves peptides in various proteins in a process that requires ATP hydrolysis. Has a chymotrypsin-like activity. Plays a major role in the degradation of misfolded proteins. The polypeptide is ATP-dependent Clp protease proteolytic subunit 3 (Streptomyces coelicolor (strain ATCC BAA-471 / A3(2) / M145)).